The sequence spans 565 residues: Proline--tRNA ligase (565 aa).

The protein belongs to the class-II aminoacyl-tRNA synthetase family. ProS type 1 subfamily. Homodimer.

The protein resides in the cytoplasm. It carries out the reaction tRNA(Pro) + L-proline + ATP = L-prolyl-tRNA(Pro) + AMP + diphosphate. Catalyzes the attachment of proline to tRNA(Pro) in a two-step reaction: proline is first activated by ATP to form Pro-AMP and then transferred to the acceptor end of tRNA(Pro). As ProRS can inadvertently accommodate and process non-cognate amino acids such as alanine and cysteine, to avoid such errors it has two additional distinct editing activities against alanine. One activity is designated as 'pretransfer' editing and involves the tRNA(Pro)-independent hydrolysis of activated Ala-AMP. The other activity is designated 'posttransfer' editing and involves deacylation of mischarged Ala-tRNA(Pro). The misacylated Cys-tRNA(Pro) is not edited by ProRS. The chain is Proline--tRNA ligase from Bacillus pumilus (strain SAFR-032).